The following is a 327-amino-acid chain: GMP reductase (327 aa).

Cys-176 serves as the catalytic Thioimidate intermediate. 205–228 serves as a coordination point for NADP(+); the sequence is IIADGGIRTHGDIAKSIRFGASMV.

It belongs to the IMPDH/GMPR family. GuaC type 2 subfamily.

It catalyses the reaction IMP + NH4(+) + NADP(+) = GMP + NADPH + 2 H(+). Its function is as follows. Catalyzes the irreversible NADPH-dependent deamination of GMP to IMP. It functions in the conversion of nucleobase, nucleoside and nucleotide derivatives of G to A nucleotides, and in maintaining the intracellular balance of A and G nucleotides. This chain is GMP reductase, found in Streptococcus pyogenes serotype M3 (strain ATCC BAA-595 / MGAS315).